Reading from the N-terminus, the 189-residue chain is UPF0398 protein LVIS_0849 (189 aa).

Belongs to the UPF0398 family.

This chain is UPF0398 protein LVIS_0849, found in Levilactobacillus brevis (strain ATCC 367 / BCRC 12310 / CIP 105137 / JCM 1170 / LMG 11437 / NCIMB 947 / NCTC 947) (Lactobacillus brevis).